Consider the following 504-residue polypeptide: Lysine--tRNA ligase (504 aa).

Mg(2+)-binding residues include E404 and E411.

It belongs to the class-II aminoacyl-tRNA synthetase family. Homodimer. It depends on Mg(2+) as a cofactor.

The protein resides in the cytoplasm. It carries out the reaction tRNA(Lys) + L-lysine + ATP = L-lysyl-tRNA(Lys) + AMP + diphosphate. The chain is Lysine--tRNA ligase from Aliarcobacter butzleri (strain RM4018) (Arcobacter butzleri).